Here is a 387-residue protein sequence, read N- to C-terminus: 3-ketoacyl-CoA thiolase (387 aa).

Residue Cys-91 is the Acyl-thioester intermediate of the active site. Residues His-343 and Cys-373 each act as proton acceptor in the active site.

The protein belongs to the thiolase-like superfamily. Thiolase family. Heterotetramer of two alpha chains (FadB) and two beta chains (FadA).

The protein resides in the cytoplasm. The catalysed reaction is an acyl-CoA + acetyl-CoA = a 3-oxoacyl-CoA + CoA. The protein operates within lipid metabolism; fatty acid beta-oxidation. In terms of biological role, catalyzes the final step of fatty acid oxidation in which acetyl-CoA is released and the CoA ester of a fatty acid two carbons shorter is formed. The protein is 3-ketoacyl-CoA thiolase of Pectobacterium carotovorum subsp. carotovorum (strain PC1).